We begin with the raw amino-acid sequence, 226 residues long: MSNGSIPVDEVIEHLRNWNFTWNIILTILLVVLQYGHYKYSVFLYGVKMAILWILWPLVLALSLFDAWASFQVNWVFFAFSILMACITLMLWIMYFVNSIRLWRRTHSWWSFNPETDALLTTSVMGRQVCIPVLGAPTGVTLTLLSGTLLVEGYKVATGVQVSQLPNFVTVAKATTTIVYGRVGRSVNASSGTGWAFYVRSKHGDYSAVSNPSAVLTDSEKVPHLV.

Residues 1 to 11 (MSNGSIPVDEV) lie on the Virion surface side of the membrane. Residues 12–32 (IEHLRNWNFTWNIILTILLVV) traverse the membrane as a helical segment. Topologically, residues 33-41 (LQYGHYKYS) are intravirion. A helical transmembrane segment spans residues 42–62 (VFLYGVKMAILWILWPLVLAL). Residues 63–75 (SLFDAWASFQVNW) lie on the Virion surface side of the membrane. The chain crosses the membrane as a helical span at residues 76-96 (VFFAFSILMACITLMLWIMYF). At 97-226 (VNSIRLWRRT…TDSEKVPHLV (130 aa)) the chain is on the intravirion side. The segment at 200 to 216 (RSKHGDYSAVSNPSAVL) is interaction with N protein.

This sequence belongs to the alphacoronaviruses M protein family. Homomultimer. Interacts with envelope E protein in the budding compartment of the host cell, which is located between endoplasmic reticulum and the Golgi complex. Forms a complex with HE and S proteins. Interacts with nucleocapsid N protein. This interaction probably participates in RNA packaging into the virus.

Its subcellular location is the virion membrane. The protein resides in the host Golgi apparatus membrane. Functionally, component of the viral envelope that plays a central role in virus morphogenesis and assembly via its interactions with other viral proteins. This Sus scrofa (Pig) protein is Membrane protein.